The sequence spans 404 residues: Glucose-1-phosphate adenylyltransferase (404 aa).

Alpha-D-glucose 1-phosphate-binding positions include Tyr99, Gly164, 179-180 (EK), and Ser197.

It belongs to the bacterial/plant glucose-1-phosphate adenylyltransferase family.

The catalysed reaction is alpha-D-glucose 1-phosphate + ATP + H(+) = ADP-alpha-D-glucose + diphosphate. It participates in glycan biosynthesis; glycogen biosynthesis. Its function is as follows. Involved in the biosynthesis of ADP-glucose building block, required in the biosynthesis of maltose-1-phosphate (M1P) and in the elongation reactions to produce linear alpha-1,4-glucans. Catalyzes the reaction between ATP and alpha-D-glucose 1-phosphate (G1P) to produce pyrophosphate and ADP-Glc. This Mycolicibacterium smegmatis (strain ATCC 700084 / mc(2)155) (Mycobacterium smegmatis) protein is Glucose-1-phosphate adenylyltransferase.